We begin with the raw amino-acid sequence, 471 residues long: 6-phosphofructo-2-kinase/fructose-2,6-bisphosphatase 1 (471 aa).

N-acetylserine is present on Ser-2. The segment at 2-250 (SQEMGELTQT…VYYLMNIHVT (249 aa)) is 6-phosphofructo-2-kinase. A Phosphoserine; by PKA modification is found at Ser-33. Residue 49-57 (GLPARGKTY) participates in ATP binding. Beta-D-fructose 6-phosphate is bound by residues Arg-82 and Arg-105. Residue Asp-131 is part of the active site. 2 residues coordinate beta-D-fructose 6-phosphate: Thr-133 and Arg-139. The residue at position 141 (Ser-141) is a Phosphoserine. Cys-161 is a catalytic residue. 170-175 (NIRQVK) is a binding site for ATP. Lys-175, Arg-196, and Tyr-200 together coordinate beta-D-fructose 6-phosphate. The tract at residues 251–471 (PRSIYLCRHG…EALDTVPAHY (221 aa)) is fructose-2,6-bisphosphatase. Arg-258 provides a ligand contact to beta-D-fructose 2,6-bisphosphate. The active-site Tele-phosphohistidine intermediate is the His-259. Residues Asn-265, Gly-271, and Arg-308 each contribute to the beta-D-fructose 2,6-bisphosphate site. Catalysis depends on Glu-328, which acts as the Proton donor/acceptor. Positions 339, 353, 357, 368, 394, and 398 each coordinate beta-D-fructose 2,6-bisphosphate. Position 350-353 (350-353 (FALR)) interacts with ATP. ATP is bound by residues 394–398 (QAVMR) and Tyr-430.

This sequence in the C-terminal section; belongs to the phosphoglycerate mutase family. As to quaternary structure, homodimer. As to expression, liver.

It catalyses the reaction beta-D-fructose 2,6-bisphosphate + H2O = beta-D-fructose 6-phosphate + phosphate. The enzyme catalyses beta-D-fructose 6-phosphate + ATP = beta-D-fructose 2,6-bisphosphate + ADP + H(+). Its activity is regulated as follows. Phosphorylation at Ser-33 inhibits the kinase and activates the bisphosphatase. Synthesis and degradation of fructose 2,6-bisphosphate. The protein is 6-phosphofructo-2-kinase/fructose-2,6-bisphosphatase 1 of Bos taurus (Bovine).